A 386-amino-acid chain; its full sequence is Galactokinase (386 aa).

Residue 35–38 (EHTD) coordinates substrate. 125-131 (GAGLSSS) contacts ATP. Residues Ser131 and Glu163 each contribute to the Mg(2+) site. Asp175 acts as the Proton acceptor in catalysis. Tyr224 contributes to the substrate binding site.

It belongs to the GHMP kinase family. GalK subfamily.

The protein localises to the cytoplasm. The enzyme catalyses alpha-D-galactose + ATP = alpha-D-galactose 1-phosphate + ADP + H(+). It functions in the pathway carbohydrate metabolism; galactose metabolism. Its function is as follows. Catalyzes the transfer of the gamma-phosphate of ATP to D-galactose to form alpha-D-galactose-1-phosphate (Gal-1-P). This is Galactokinase from Vibrio cholerae serotype O1 (strain ATCC 39315 / El Tor Inaba N16961).